We begin with the raw amino-acid sequence, 504 residues long: Amphoterin-induced protein 3 (504 aa).

The N-terminal stretch at 1-19 (MTWLVLLGTLLCMLRVGLG) is a signal peptide. The Extracellular segment spans residues 20-383 (TPDSEGFPPR…PRPEPEAFNT (364 aa)). Residues 25 to 61 (GFPPRALHNCPYKCICAADLLSCTGLGLQDVPAELPA) enclose the LRRNT domain. 2 disulfide bridges follow: C34-C40 and C38-C47. 6 LRR repeats span residues 62 to 83 (ATAD…WLAP), 86 to 107 (QLRA…VFVN), 110 to 133 (GLRL…DGLG), 134 to 155 (ALEK…AFHG), 158 to 178 (ALSH…DHLH), and 184 to 207 (HLLT…AALP). Residue N107 is glycosylated (N-linked (GlcNAc...) asparagine). The 57-residue stretch at 219–275 (NPLPCDCRLYHLLQRWHQRGLSAVRDFAREYVCLAFKVPASRVRFFQHSRVFENCSS) folds into the LRRCT domain. Disulfide bonds link C223/C251, C225/C273, and C300/C352. N-linked (GlcNAc...) asparagine glycans are attached at residues N272, N301, N362, and N368. Residues 277 to 370 (PALGLERPEE…HNQTHEYNVS (94 aa)) enclose the Ig-like C2-type domain. A helical membrane pass occupies residues 384-404 (GFTTLLGCAVGLVLVLLYLFA). Over 405–504 (PPCRCCRRAC…SIGSEGPMTT (100 aa)) the chain is Cytoplasmic. Positions 422–448 (TPSPLQELSAQSSVLSTTPPDAPSRKA) are disordered. The span at 424-440 (SPLQELSAQSSVLSTTP) shows a compositional bias: polar residues.

It belongs to the immunoglobulin superfamily. AMIGO family. Binds AMIGO1 or AMIGO2.

Its subcellular location is the membrane. In terms of biological role, may mediate heterophilic cell-cell interaction. May contribute to signal transduction through its intracellular domain. The polypeptide is Amphoterin-induced protein 3 (Homo sapiens (Human)).